The sequence spans 463 residues: Cis-zeatin O-glucosyltransferase 2 (463 aa).

The active-site Proton acceptor is the His-21. The an anthocyanidin site is built by His-21 and Asn-91. The Charge relay role is filled by Asp-127. Residues Ala-339, Gln-341, His-356, Trp-359, Asn-360, Ser-361, Glu-364, Asp-380, and Gln-381 each contribute to the UDP-alpha-D-glucose site.

It belongs to the UDP-glycosyltransferase family. In terms of tissue distribution, highly expressed in root. Expressed at much lower level in kernel. Weakly or not expressed in expressed in stems and leaves.

It catalyses the reaction cis-zeatin + UDP-alpha-D-glucose = O-beta-D-glucosyl-cis-zeatin + UDP + H(+). Utilizes UDP-glucose as the sugar donor and catalyzes the formation of O-beta-D-glucosyl-cis-zeatin from cis-zeatin. May regulate active versus storage forms of cytokinins and could have an impact on seed growth. In Zea mays (Maize), this protein is Cis-zeatin O-glucosyltransferase 2.